The chain runs to 464 residues: 26S proteasome regulatory subunit 7 homolog B (464 aa).

246–253 (GPPGSGKT) serves as a coordination point for ATP. K452 participates in a covalent cross-link: Glycyl lysine isopeptide (Lys-Gly) (interchain with G-Cter in ubiquitin).

The protein belongs to the AAA ATPase family. Component of the 19S regulatory particle (RP/PA700) base subcomplex of the 26S proteasome. The 26S proteasome is composed of a core protease (CP), known as the 20S proteasome, capped at one or both ends by the 19S regulatory particle (RP/PA700). The RP/PA700 complex is composed of at least 17 different subunits in two subcomplexes, the base and the lid, which form the portions proximal and distal to the 20S proteolytic core, respectively.

It localises to the cytoplasm. The protein resides in the nucleus. Functionally, the 26S proteasome is involved in the ATP-dependent degradation of ubiquitinated proteins. The regulatory (or ATPase) complex confers ATP dependency and substrate specificity to the 26S complex. The polypeptide is 26S proteasome regulatory subunit 7 homolog B (RPT1B) (Arabidopsis thaliana (Mouse-ear cress)).